Consider the following 840-residue polypeptide: Cancer-associated gene 1 protein homolog (840 aa).

Residues 303 to 559 are a coiled coil; the sequence is MALNEILKKL…HVARSEEQNY (257 aa). Positions 800-840 are disordered; the sequence is EDLIRKPREKARKPRSKSLENHPKSMTMMPAVFKENRNDLD. The segment covering 806–815 has biased composition (basic residues); that stretch reads PREKARKPRS.

The polypeptide is Cancer-associated gene 1 protein homolog (CAGE1) (Macaca fascicularis (Crab-eating macaque)).